Consider the following 1078-residue polypeptide: MGDEPPSLEYIQAKDLFPPRELVKEEEKLQVPFPVLPGEGVEYLGSANDAVIAISNYRLHIKFKDSVVNVPLRMIEAVESRDMFQLQIICKDSKVVRCHFSTFKQCQEWLKRLSRATLRPAKQEDLFAFAYHAWCQGVCTDEEEPLIHLCRPGDHVKSRFQIELKRMGFDLQNAWRVSEINNNYKLCQSYPQKLLVPVWITDKELENVATFRSWKRIPVVVYRHTRTGAVIARCSQPEISWWGWRNADDEYLVTSIAKACALNPAVRMPNGNPSNKGNNDGSDNSDTDFDSSLTACPVEGGGVPQKLLIVDARSYTAAVANRAKGGGCECEEYYPNCEVAFMGMANIHSIRNSFQYLRAVCNQVPDPGNWLSALESTKWLQHLSAMLKAATVVASAVDREERPVLVHCSDGWDRTPQIVSLAKILLDPYYRTLEGFQVLVETDWLDYGHKFADRCGHQENREDQNEQCPVFLQWLDCIHQLLFQFPCHFEFNHAFLVKLVQHTYSCLYGTFLANNLCEREMRNIYKRTCSVWSLLRTGNKIFHNLLYMPGSDLVLHPVCHVRALQLWTAVYLPATSPCTPMDDRMEMYLTPASQGPQFHARSLVRLPKTRSMDNLLTACDSGGLLTRTSSDPNLNNHQGNLESCSSSKEGNETEICDIQQQALSIEPKEEDGNDSKSTDHENEDSGSATNQNNNEQNALNNILSIAKPDSIQCKRDRFKSVLEKSSVIPVPSNEGTITDDNSHSNGTSEHLPVPALVTNGSVQNKSCVDVSKAMKLSTELSRTDKKPVFQTQRDEFSFCTSNWDSLPGMMRSVPICEVGLRRPLSYDCSTRSQHSRNGRHTMKLTGNLPASFHCSGPFTKRCRCVMACHTKQVQGSRFLPLACPSPAPLIYQDDDGLPIPSDVVQQRLRQMEASYKQEVDLLRRQVWELQLQLEIRQYCAPPSEPEADYEDDFTCVKESDGSDMDDLYSDKSEDRLSEASWEPVDKKETEVTRWVPDHMASHCFNCDCEFWLAKRRHHCRNCGNVFCAACCHLKLPIPDQQLYDPVLVCNTCYDHIQVSRARELMSQQLKKPLTAASS.

The Myotubularin phosphatase domain occupies 154–571 (DHVKSRFQIE…RALQLWTAVY (418 aa)). Residues 267-290 (RMPNGNPSNKGNNDGSDNSDTDFD) form a disordered region. The segment covering 270 to 282 (NGNPSNKGNNDGS) has biased composition (low complexity). Residues N321, N346, and I347 each contribute to the a 1,2-diacyl-sn-glycero-3-phospho-(1D-myo-inositol-3,5-bisphosphate) site. Positions 321, 346, and 347 each coordinate a 1,2-diacyl-sn-glycero-3-phospho-(1D-myo-inositol-3-phosphate). The active-site Phosphocysteine intermediate is C408. The a 1,2-diacyl-sn-glycero-3-phospho-(1D-myo-inositol-3,5-bisphosphate) site is built by S409, D410, G411, W412, D413, R414, K450, and R454. A 1,2-diacyl-sn-glycero-3-phospho-(1D-myo-inositol-3-phosphate) is bound by residues S409, D410, G411, W412, D413, and R414. A 1,2-diacyl-sn-glycero-3-phospho-(1D-myo-inositol-3-phosphate) is bound at residue R454. The segment covering 629 to 648 (SSDPNLNNHQGNLESCSSSK) has biased composition (polar residues). The interval 629–694 (SSDPNLNNHQ…SGSATNQNNN (66 aa)) is disordered. Positions 904–935 (VQQRLRQMEASYKQEVDLLRRQVWELQLQLEI) form a coiled coil. The tract at residues 960–982 (DGSDMDDLYSDKSEDRLSEASWE) is disordered. Over residues 968–982 (YSDKSEDRLSEASWE) the composition is skewed to basic and acidic residues. The FYVE-type zinc finger occupies 997 to 1057 (DHMASHCFNC…VCNTCYDHIQ (61 aa)). The Zn(2+) site is built by C1003, C1006, C1019, C1022, C1027, C1030, C1049, and C1052.

It belongs to the protein-tyrosine phosphatase family. Non-receptor class myotubularin subfamily. As to quaternary structure, homooligomeric.

It is found in the early endosome membrane. It localises to the recycling endosome membrane. Its subcellular location is the late endosome membrane. The protein resides in the cytoplasmic vesicle. The protein localises to the phagosome membrane. The catalysed reaction is a 1,2-diacyl-sn-glycero-3-phospho-(1D-myo-inositol-3-phosphate) + H2O = a 1,2-diacyl-sn-glycero-3-phospho-(1D-myo-inositol) + phosphate. It carries out the reaction a 1,2-diacyl-sn-glycero-3-phospho-(1D-myo-inositol-3,5-bisphosphate) + H2O = a 1,2-diacyl-sn-glycero-3-phospho-(1D-myo-inositol-5-phosphate) + phosphate. The enzyme catalyses 1,2-dioctanoyl-sn-glycero-3-phospho-(1-D-myo-inositol-3-phosphate) + H2O = 1,2-dioctanoyl-sn-glycero-3-phospho-(1D-myo-inositol) + phosphate. It catalyses the reaction 1,2-dioctanoyl-sn-glycero-3-phospho-(1D-myo-inositol-3,5-bisphosphate) + H2O = 1,2-dioctanoyl-sn-glycero-3-phospho-(1D-myo-inositol-5-phosphate) + phosphate. Functionally, lipid phosphatase that specifically dephosphorylates the D-3 position of phosphatidylinositol 3-phosphate and phosphatidylinositol 3,5-bisphosphate, generating phosphatidylinositol and phosphatidylinositol 5-phosphate. Decreases the levels of phosphatidylinositol 3-phosphate, a phospholipid found in cell membranes where it acts as key regulator of both cell signaling and intracellular membrane traffic, in a subset of endosomal membranes to negatively regulate both endocytic recycling and trafficking and/or maturation of endosomes toward lysosomes. Through phosphatidylinositol 3-phosphate turnover in phagosome membranes regulates phagocytosis and phagosome maturation. By decreasing phosphatidylinositol 3-monophosphate (PI3P) levels in immune cells it can also regulate the innate immune response. Beside its lipid phosphatase activity, can also function as a molecular adapter to regulate midbody abscission during mitotic cytokinesis. Can also negatively regulate TGF-beta and BMP signaling through Smad proteins dephosphorylation and retention in endosomes. This is Phosphatidylinositol-3,5-bisphosphate 3-phosphatase MTMR4 (mtmr4) from Xenopus laevis (African clawed frog).